We begin with the raw amino-acid sequence, 341 residues long: HTH-type transcriptional repressor PurR (341 aa).

Residues 2-56 (ATIKDVAKRANVSTTTVSHVINKTRFVAEETRNAVWTAIKELHYSPSAVARSLKV) enclose the HTH lacI-type domain. The H-T-H motif DNA-binding region spans 4–23 (IKDVAKRANVSTTTVSHVIN). A DNA-binding region spans residues 48-56 (SAVARSLKV). Hypoxanthine is bound by residues Y73, R190, T192, F221, and D275.

In terms of assembly, homodimer.

It functions in the pathway purine metabolism; purine nucleotide biosynthesis [regulation]. In terms of biological role, is the main repressor of the genes involved in the de novo synthesis of purine nucleotides, regulating purB, purC, purEK, purF, purHD, purL, purMN and guaBA expression. PurR is allosterically activated to bind its cognate DNA by binding the purine corepressors, hypoxanthine or guanine, thereby effecting transcription repression. This chain is HTH-type transcriptional repressor PurR, found in Salmonella paratyphi A (strain ATCC 9150 / SARB42).